We begin with the raw amino-acid sequence, 226 residues long: Elongation factor G (226 aa).

This sequence belongs to the GTP-binding elongation factor family. EF-G/EF-2 subfamily.

Its subcellular location is the cytoplasm. In terms of biological role, catalyzes the GTP-dependent ribosomal translocation step during translation elongation. During this step, the ribosome changes from the pre-translocational (PRE) to the post-translocational (POST) state as the newly formed A-site-bound peptidyl-tRNA and P-site-bound deacylated tRNA move to the P and E sites, respectively. Catalyzes the coordinated movement of the two tRNA molecules, the mRNA and conformational changes in the ribosome. The protein is Elongation factor G (fusA) of Neisseria gonorrhoeae.